Consider the following 298-residue polypeptide: Mitochondrial intermembrane space import and assembly protein 40 (298 aa).

Residues 1 to 33 (MYRTALRPSQSALRAIRSTTSPSALVSSGARRF) constitute a mitochondrion transit peptide. Residues 34 to 52 (ASTTSAPKKKSTWKGAAVR) are Mitochondrial matrix-facing. The helical; Signal-anchor for type II membrane protein transmembrane segment at 53-69 (WGLAVAAVYYYNTSPIF) threads the bilayer. Residues 70 to 298 (SDELPETAGT…TAANNNKKQQ (229 aa)) lie on the Mitochondrial intermembrane side of the membrane. The interval 101-159 (RQAAEHAAARKAAQAAAKAAATPATPSESVEEQITKAEAEAEAVPEGDSKPRSESTEGV) is disordered. Residues 110 to 121 (RKAAQAAAKAAA) are compositionally biased toward low complexity. Intrachain disulfides connect Cys-191/Cys-193, Cys-202/Cys-235, and Cys-212/Cys-225. Residues 199–243 (HGPCGEEFKAAFSCFVYSTEEPKGMDCIEKFSHMQDCFRKYPEVY) enclose the CHCH domain. 2 consecutive short sequence motifs (cx9C motif) follow at residues 202 to 212 (CGEEFKAAFSC) and 225 to 235 (CIEKFSHMQDC). The interval 248–298 (ADDEEAERASAAAPAAEGTPAKEEPVENKKEEALEPATHDATAANNNKKQQ) is disordered. The segment covering 256–266 (ASAAAPAAEGT) has biased composition (low complexity). Positions 267-280 (PAKEEPVENKKEEA) are enriched in basic and acidic residues.

As to quaternary structure, monomer. Cu(2+) serves as cofactor. Requires Zn(2+) as cofactor.

It localises to the mitochondrion inner membrane. Required for the import and folding of small cysteine-containing proteins (small Tim) in the mitochondrial intermembrane space (IMS). Forms a redox cycle with ERV1 that involves a disulfide relay system. Precursor proteins to be imported into the IMS are translocated in their reduced form into the mitochondria. The oxidized form of MIA40 forms a transient intermolecular disulfide bridge with the reduced precursor protein, resulting in oxidation of the precursor protein that now contains an intramolecular disulfide bond and is able to undergo folding in the IMS. The polypeptide is Mitochondrial intermembrane space import and assembly protein 40 (mia-40) (Neurospora crassa (strain ATCC 24698 / 74-OR23-1A / CBS 708.71 / DSM 1257 / FGSC 987)).